Consider the following 118-residue polypeptide: Basic phospholipase A2 acanthin-2 (118 aa).

7 cysteine pairs are disulfide-bonded: cysteine 11/cysteine 71, cysteine 27/cysteine 117, cysteine 29/cysteine 45, cysteine 44/cysteine 98, cysteine 51/cysteine 91, cysteine 60/cysteine 84, and cysteine 78/cysteine 89. Tyrosine 28, glycine 30, and glycine 32 together coordinate Ca(2+). Histidine 48 is a catalytic residue. Aspartate 49 provides a ligand contact to Ca(2+). Aspartate 92 is an active-site residue.

It depends on Ca(2+) as a cofactor. As to expression, expressed by the venom gland.

The protein localises to the secreted. The enzyme catalyses a 1,2-diacyl-sn-glycero-3-phosphocholine + H2O = a 1-acyl-sn-glycero-3-phosphocholine + a fatty acid + H(+). Snake venom phospholipase A2 (PLA2) that potently inhibits ADP-(IC(50)=12 nM) and collagen-induced (IC(50)=4 nM) platelet aggregation when tested on human whole blood. PLA2 catalyzes the calcium-dependent hydrolysis of the 2-acyl groups in 3-sn-phosphoglycerides. The chain is Basic phospholipase A2 acanthin-2 from Acanthophis antarcticus (Common death adder).